The sequence spans 596 residues: MQNLALISLFSPFVAFLFASCFALSEKKQFVGIICSLLVALSAFCSLYLLFCNEAFNVSLFEWFAGVNFGFDIDAISLTMMSVVGIVATCVHFYSIFYMAHDEGFNKFFAYLGLFVFSMLFLVMSDNFLGLFVGWEGVGLCSWLLIGFWYKNDTYSFAANEAFIMNRIADLGMLLGIFWLYLQAGTLKYDEVFSMAQSLDHNALILIATCLFIGAMGKSAQFPFHTWLADAMAGPTPVSALIHAATMVTAGVYLVIRASTLYDLVPEVSYIIALLGAFVAIFAASMALVVRDLKRIIAYSTLSQLGYMFVAAGLGAYGIALFHLATHAFFKSLLFLGAGNVMHAMNDKLDIKKMGGLFKPLKITAILMCIGSLALAGIYPFAGFFSKDLILGYSFISFHHGIFLVLLIAAFLTAFYSFRLLMLVFFTPARHDEHPHEASKIALLAMSPLMVLAIIAGFFEHSFFEYLSTKLVFIDAQNQIVMICASVAAILGAILAIFAYKNSWFKESIEENKIHKLLSNDYFIPQFYHQFIVSKYESLCAILKHCDLYIFDRIVEKIALYSQNISQKMIMPNSLNLMLRFLVAAFVILLILVWMV.

14 consecutive transmembrane segments (helical) span residues 4–24, 31–51, 80–100, 104–124, 162–182, 204–224, 236–256, 270–290, 305–325, 365–385, 395–415, 441–461, 480–500, and 576–596; these read LALISLFSPFVAFLFASCFAL, VGIICSLLVALSAFCSLYLLF, MMSVVGIVATCVHFYSIFYMA, GFNKFFAYLGLFVFSMLFLVM, AFIMNRIADLGMLLGIFWLYL, LILIATCLFIGAMGKSAQFPF, TPVSALIHAATMVTAGVYLVI, YIIALLGAFVAIFAASMALVV, LGYMFVAAGLGAYGIALFHLA, AILMCIGSLALAGIYPFAGFF, FISFHHGIFLVLLIAAFLTAF, IALLAMSPLMVLAIIAGFFEH, IVMICASVAAILGAILAIFAY, and NLMLRFLVAAFVILLILVWMV.

The protein belongs to the complex I subunit 5 family.

It localises to the cell membrane. The enzyme catalyses a quinone + NADH + 5 H(+)(in) = a quinol + NAD(+) + 4 H(+)(out). Functionally, NDH-1 shuttles electrons from NADH, via FMN and iron-sulfur (Fe-S) centers, to quinones in the respiratory chain. The immediate electron acceptor for the enzyme in this species is believed to be menaquinone. Couples the redox reaction to proton translocation (for every two electrons transferred, four hydrogen ions are translocated across the cytoplasmic membrane), and thus conserves the redox energy in a proton gradient. This is NADH-quinone oxidoreductase subunit L (nuoL) from Campylobacter jejuni subsp. jejuni serotype O:2 (strain ATCC 700819 / NCTC 11168).